The sequence spans 141 residues: Nucleoside diphosphate kinase (141 aa).

Residues lysine 11, phenylalanine 59, arginine 87, threonine 93, arginine 104, and asparagine 114 each coordinate ATP. The Pros-phosphohistidine intermediate role is filled by histidine 117.

It belongs to the NDK family. Homotetramer. It depends on Mg(2+) as a cofactor.

The protein resides in the cytoplasm. The catalysed reaction is a 2'-deoxyribonucleoside 5'-diphosphate + ATP = a 2'-deoxyribonucleoside 5'-triphosphate + ADP. It catalyses the reaction a ribonucleoside 5'-diphosphate + ATP = a ribonucleoside 5'-triphosphate + ADP. Functionally, major role in the synthesis of nucleoside triphosphates other than ATP. The ATP gamma phosphate is transferred to the NDP beta phosphate via a ping-pong mechanism, using a phosphorylated active-site intermediate. The protein is Nucleoside diphosphate kinase of Xanthomonas axonopodis pv. citri (strain 306).